The primary structure comprises 398 residues: tRNA pseudouridine synthase D (398 aa).

D76 acts as the Nucleophile in catalysis. The TRUD domain maps to 151–360 (GVPNFFGEQR…MPGERRPLRI (210 aa)).

It belongs to the pseudouridine synthase TruD family.

It catalyses the reaction uridine(13) in tRNA = pseudouridine(13) in tRNA. Responsible for synthesis of pseudouridine from uracil-13 in transfer RNAs. In Syntrophotalea carbinolica (strain DSM 2380 / NBRC 103641 / GraBd1) (Pelobacter carbinolicus), this protein is tRNA pseudouridine synthase D.